We begin with the raw amino-acid sequence, 473 residues long: M-phase inducer phosphatase 3 (473 aa).

The interval 1 to 23 (MSTELFSSTREEGSSGSGPSFRS) is disordered. N-acetylserine is present on serine 2. 2 positions are modified to phosphoserine: serine 20 and serine 38. Threonine 48 carries the phosphothreonine modification. Residues serine 57, serine 61, and serine 64 each carry the phosphoserine modification. Residue threonine 67 is modified to Phosphothreonine. Serine 122 carries the phosphoserine; by CDK1 modification. Residue serine 129 is modified to Phosphoserine. Threonine 130 carries the phosphothreonine modification. The interval 132 to 158 (NGLDRGHRKRDAMCSSSANKENDNGNL) is disordered. A compositionally biased stretch (polar residues) spans 145 to 158 (CSSSANKENDNGNL). Serine 168 carries the post-translational modification Phosphoserine. Phosphoserine; by PLK3 occurs at positions 191 and 198. Serine 214 bears the Phosphoserine; by CDK1 mark. At serine 216 the chain carries Phosphoserine; by CHEK1, CHEK2, BRSK1, MAPK14 AND MARK3. The Rhodanese domain maps to 321–428 (LIEKFYVIDC…FFPEYMELCE (108 aa)). The segment at 334–379 (YEYLGGHIQGALNLYSQEELFNFFLKKPIVPLDTQKRIIIVFHCEF) is HIV-1 Vpr binding site. Residue cysteine 377 is part of the active site. Phosphoserine is present on serine 472.

The protein belongs to the MPI phosphatase family. Interacts with MAPK14 and 14-3-3 proteins. When phosphorylated on Ser-129 and/or Thr-130, interacts with PLK1. Interacts with MARK3/C-TAK1. As to quaternary structure, (Microbial infection) Interacts with HIV-1 Vpr; this interaction inactivates CDC25C phosphatase activity. In terms of processing, phosphorylated by CHEK1 and MAPK14 at Ser-216. This phosphorylation creates a binding site for 14-3-3 protein and inhibits the phosphatase. Phosphorylated by PLK4. Phosphorylated by PLK1, leading to activate the phosphatase activity. Phosphorylation by PLK3 at Ser-191 promotes nuclear translocation. Ser-198 is a minor phosphorylation site. Was initially reported to be phosphorylated by PLK3 at Ser-216. However, such phosphorylation by PLK3 was not confirmed by other groups. Phosphorylation at Thr-48, Thr-67, Ser-122, Thr-130, Ser-168 and Ser-214 occurs at G2 and G2-M transition and is probably catalyzed by CDK1. Ser-168 phosphorylation levels are lower than those at the other 5 CDK1 sites. Phosphorylation by CDK1 leads to increased activity.

It localises to the nucleus. The enzyme catalyses O-phospho-L-tyrosyl-[protein] + H2O = L-tyrosyl-[protein] + phosphate. In terms of biological role, functions as a dosage-dependent inducer in mitotic control. Tyrosine protein phosphatase required for progression of the cell cycle. When phosphorylated, highly effective in activating G2 cells into prophase. Directly dephosphorylates CDK1 and activates its kinase activity. The sequence is that of M-phase inducer phosphatase 3 (CDC25C) from Homo sapiens (Human).